A 123-amino-acid polypeptide reads, in one-letter code: Large ribosomal subunit protein bL12 (123 aa).

The protein belongs to the bacterial ribosomal protein bL12 family. In terms of assembly, homodimer. Part of the ribosomal stalk of the 50S ribosomal subunit. Forms a multimeric L10(L12)X complex, where L10 forms an elongated spine to which 2 to 4 L12 dimers bind in a sequential fashion. Binds GTP-bound translation factors.

In terms of biological role, forms part of the ribosomal stalk which helps the ribosome interact with GTP-bound translation factors. Is thus essential for accurate translation. This is Large ribosomal subunit protein bL12 from Bartonella quintana (strain Toulouse) (Rochalimaea quintana).